The following is a 250-amino-acid chain: 1-(5-phosphoribosyl)-5-[(5-phosphoribosylamino)methylideneamino] imidazole-4-carboxamide isomerase (250 aa).

Catalysis depends on Asp-12, which acts as the Proton acceptor. The active-site Proton donor is Asp-133.

This sequence belongs to the HisA/HisF family.

It is found in the cytoplasm. The enzyme catalyses 1-(5-phospho-beta-D-ribosyl)-5-[(5-phospho-beta-D-ribosylamino)methylideneamino]imidazole-4-carboxamide = 5-[(5-phospho-1-deoxy-D-ribulos-1-ylimino)methylamino]-1-(5-phospho-beta-D-ribosyl)imidazole-4-carboxamide. It participates in amino-acid biosynthesis; L-histidine biosynthesis; L-histidine from 5-phospho-alpha-D-ribose 1-diphosphate: step 4/9. The chain is 1-(5-phosphoribosyl)-5-[(5-phosphoribosylamino)methylideneamino] imidazole-4-carboxamide isomerase from Zymomonas mobilis subsp. mobilis (strain ATCC 31821 / ZM4 / CP4).